Consider the following 1334-residue polypeptide: WASH complex subunit 2 (1334 aa).

The interval 1-219 (MNRTSPDSER…VGSDRGSIVD (219 aa)) is sufficient for interaction with WASHC3, WASHC4 and WASHC5; required for interaction with WASHC1. S157, S159, S204, S205, and S209 each carry phosphoserine. A compositionally biased stretch (low complexity) spans 201–213 (GELSSEEGSVGSD). The segment at 201–471 (GELSSEEGSV…SKPSKTDKVK (271 aa)) is disordered. Acidic residues-rich tracts occupy residues 219–232 (DSEDEKEEEESDED) and 249–274 (SDEEEDDDGDLFADSEKEGDDIEDIE). S284 carries the phosphoserine modification. The segment covering 289–324 (LAARIKGDISNQRKEGQTDGKPQKTVKEKKERRTPA) has biased composition (basic and acidic residues). T322 is subject to Phosphothreonine. The segment at 347 to 594 (SRGGLFSNGQ…QTSSLQPQSQ (248 aa)) is sufficient for interaction with CCDC93. Positions 348-1334 (RGGLFSNGQG…DDPLNAFGSQ (987 aa)) are interaction with VPS35. An LFa 1 motif is present at residues 358–368 (LFDDEDESDLF). S388 bears the Phosphoserine mark. Short sequence motifs (LFa) lie at residues 441–457 (LFDDDDNDNDEDDNNFF) and 476–485 (IFDDDEGDLF). The segment covering 442–454 (FDDDDNDNDEDDN) has biased composition (acidic residues). The segment at 492–650 (LPAASVSQTH…DSGATQGQEA (159 aa)) is disordered. The segment covering 513-530 (LPSSKNLKLVSETKTQKG) has biased composition (polar residues). Short sequence motifs (LFa) lie at residues 531–542 (LFSDEEDSEDLF) and 566–577 (LFGDEDEEDSLF). S533 and S538 each carry phosphoserine. Over residues 541–561 (LFSSQSSSKPKSASLPSSQPP) the composition is skewed to low complexity. Polar residues-rich tracts occupy residues 584–594 (KQTSSLQPQSQ) and 601–611 (EQPSKKTSALL). Phosphoserine is present on residues S613 and S614. The span at 625 to 639 (SHTKLASDNKSKGEL) shows a compositional bias: basic and acidic residues. Short sequence motifs (LFa) lie at residues 658–670 (LFEDDDDDEVDLF) and 686–698 (LFEDDAESGSSLF). Residues 691 to 837 (AESGSSLFGL…SRPKSTGVFQ (147 aa)) are disordered. Phosphoserine is present on residues S723, S747, S752, S783, and S798. A compositionally biased stretch (acidic residues) spans 800–811 (FDEDEDKVEDES). The span at 818 to 830 (DGREKGLKTDSRP) shows a compositional bias: basic and acidic residues. 2 consecutive short sequence motifs (LFa) follow at residues 835–843 (VFQDEELLF) and 852–858 (DPDVDLF). Disordered regions lie at residues 862–948 (KKIR…PSSR) and 1014–1225 (AQAD…SKTH). S870 and S873 each carry phosphoserine. Residues 874–884 (LFGDDEDDDLF) carry the LFa 10 motif. Positions 894–906 (PEKKGTLKKDHPV) are enriched in basic and acidic residues. The span at 908–919 (LKNQDPLDSTQG) shows a compositional bias: polar residues. The segment at 932 to 1334 (QDSSGLTPFK…DDPLNAFGSQ (403 aa)) is interaction with phospholipids. Residues 1023–1041 (NKSRVKVRGKRRPQTRAAR) are compositionally biased toward basic residues. A required for interaction with F-actin-capping protein subunit alpha (CAPZA1 or CAPZA2 or CAPZA3) region spans residues 1024–1042 (KSRVKVRGKRRPQTRAARR). Phosphoserine occurs at positions 1049, 1067, 1084, and 1109. Short sequence motifs (LFa) lie at residues 1124-1131 (LFDSGDIF), 1164-1178 (AFPDLSEGSSTEDLF), and 1194-1202 (LLEDEEDLF). Phosphoserine is present on residues S1169, S1172, and S1173. Residues 1203-1225 (ADPRGKKNERKPDSHQDSVSKTH) show a composition bias toward basic and acidic residues. 3 consecutive short sequence motifs (LFa) follow at residues 1227 to 1233 (IFEDDIF), 1255 to 1263 (LFDDNIDIF), and 1283 to 1292 (MFDDDTDDIF). The interval 1294–1334 (SGLQAKASKPKSQSAEAASEQRSEHKVASIFDDPLNAFGSQ) is disordered. Low complexity predominate over residues 1297–1311 (QAKASKPKSQSAEAA). An LFa 17 motif is present at residues 1323 to 1331 (IFDDPLNAF). S1333 is modified (phosphoserine).

It belongs to the FAM21 family. As to quaternary structure, component of the WASH core complex also described as WASH regulatory complex (SHRC) composed of WASHC1, WASHC2, WASHC3, WASHC4 and WASHC5; in the complex interacts (via N-terminus) directly with WASHC1. The WASH core complex associates with the F-actin-capping protein dimer (formed by CAPZA1, CAPZA2 or CAPZA3 and CAPZB) in a transient or substoichiometric manner which was initially described as WASH complex. Interacts with VPS35; mediates the association with the retromer CSC complex. Interacts with FKBP15. Interacts with CCDC93, CCDC22, VPS35L; indicative for an association of the WASH core complex with the CCC and retriever complexes. Directly interacts with TBC1D23.

It is found in the early endosome membrane. The protein resides in the cell membrane. Its function is as follows. Acts as a component of the WASH core complex that functions as a nucleation-promoting factor (NPF) at the surface of endosomes, where it recruits and activates the Arp2/3 complex to induce actin polymerization, playing a key role in the fission of tubules that serve as transport intermediates during endosome sorting. Mediates the recruitment of the WASH core complex to endosome membranes via binding to phospholipids and VPS35 of the retromer CSC. Mediates the recruitment of the F-actin-capping protein dimer to the WASH core complex probably promoting localized F-actin polymerization needed for vesicle scission. Via its C-terminus binds various phospholipids, most strongly phosphatidylinositol 4-phosphate (PtdIns-(4)P), phosphatidylinositol 5-phosphate (PtdIns-(5)P) and phosphatidylinositol 3,5-bisphosphate (PtdIns-(3,5)P2). Involved in the endosome-to-plasma membrane trafficking and recycling of SNX27-retromer-dependent cargo proteins, such as GLUT1. Required for the association of DNAJC13, ENTR1, ANKRD50 with retromer CSC subunit VPS35. Required for the endosomal recruitment of CCC and retriever complexes subunits COMMD1 and CCDC93 as well as the retrievere complex subunit VPS35L. The polypeptide is WASH complex subunit 2 (Mus musculus (Mouse)).